The chain runs to 297 residues: MDSKITRLIEQASVIVGALPYLQAYRDKTFLIKFGGSAMDDARLVKKLMRDIVLLEVLGFNPVIVHGGGKAISKAMAEAGLEARFVNGLRVTTPEAISIVERTLSGTINPGLVQMFRDYGGKGVGIPGTEIFVGERIHEKDEQGNPIDIGEVGNVIGCLTERITEALELQITPIVSPLAKELGTHKPLNVNADLAAAALAKELKPVKLIYISDVPGIMKDPSDPSTLIKSVTRTEALDLIKDGTVSGGMIPKIHSAIDALNAGVRKVHFIDGRLPHTLLLEIFTPDGIGTEIIREQR.

Substrate contacts are provided by residues 68 to 69, Arg90, and Asn189; that span reads GG.

It belongs to the acetylglutamate kinase family. ArgB subfamily.

It localises to the cytoplasm. The enzyme catalyses N-acetyl-L-glutamate + ATP = N-acetyl-L-glutamyl 5-phosphate + ADP. The protein operates within amino-acid biosynthesis; L-arginine biosynthesis; N(2)-acetyl-L-ornithine from L-glutamate: step 2/4. Catalyzes the ATP-dependent phosphorylation of N-acetyl-L-glutamate. This Akkermansia muciniphila (strain ATCC BAA-835 / DSM 22959 / JCM 33894 / BCRC 81048 / CCUG 64013 / CIP 107961 / Muc) protein is Acetylglutamate kinase.